The following is a 268-amino-acid chain: Protein CONTINUOUS VASCULAR RING 1 (268 aa).

Residues 1-70 (MGDEKPVIVM…GWASKKFMTG (70 aa)) lie on the Cytoplasmic side of the membrane. A disordered region spans residues 21–48 (IPVADSGDKDDGSSSKPSSSSSASSSSH). The span at 34 to 48 (SSKPSSSSSASSSSH) shows a compositional bias: low complexity. A helical membrane pass occupies residues 71–91 (CVILLPIAITFYITWWFIHFV). The Extracellular portion of the chain corresponds to 92–103 (DGFFSPIYAQLG). The helical transmembrane segment at 104–124 (INVFGFGFLTSIAFIFLVGVF) threads the bilayer. Residues 125–268 (MSSWLGASVL…LASIDRATSL (144 aa)) are Cytoplasmic-facing.

Belongs to the plant COV1 protein family. As to expression, mostly expressed in flowers and stems, and, to a lower extent, in roots and leaves.

The protein localises to the membrane. Functionally, involved in the regulation of vascular patterning in the stem, probably by negatively regulating the differentiation of vascular tissue. This Arabidopsis thaliana (Mouse-ear cress) protein is Protein CONTINUOUS VASCULAR RING 1.